A 196-amino-acid polypeptide reads, in one-letter code: ATP-dependent Clp protease proteolytic subunit (196 aa).

Catalysis depends on S101, which acts as the Nucleophile. H126 is a catalytic residue.

It belongs to the peptidase S14 family. Component of the chloroplastic Clp protease core complex.

The protein localises to the plastid. Its subcellular location is the chloroplast stroma. The catalysed reaction is Hydrolysis of proteins to small peptides in the presence of ATP and magnesium. alpha-casein is the usual test substrate. In the absence of ATP, only oligopeptides shorter than five residues are hydrolyzed (such as succinyl-Leu-Tyr-|-NHMec, and Leu-Tyr-Leu-|-Tyr-Trp, in which cleavage of the -Tyr-|-Leu- and -Tyr-|-Trp bonds also occurs).. Cleaves peptides in various proteins in a process that requires ATP hydrolysis. Has a chymotrypsin-like activity. Plays a major role in the degradation of misfolded proteins. This Pleurastrum terricola (Filamentous green alga) protein is ATP-dependent Clp protease proteolytic subunit.